The sequence spans 343 residues: Glyceraldehyde-3-phosphate dehydrogenase (343 aa).

NAD(+) contacts are provided by residues Thr-11–Ile-12 and Gly-110. A D-glyceraldehyde 3-phosphate-binding site is contributed by Ser-139 to Asn-141. Catalysis depends on Cys-140, which acts as the Nucleophile. Arg-168 provides a ligand contact to NAD(+). His-194–Gly-195 serves as a coordination point for D-glyceraldehyde 3-phosphate. Gln-301 is a binding site for NAD(+).

This sequence belongs to the glyceraldehyde-3-phosphate dehydrogenase family. Homotetramer.

It localises to the cytoplasm. The enzyme catalyses D-glyceraldehyde 3-phosphate + phosphate + NADP(+) = (2R)-3-phospho-glyceroyl phosphate + NADPH + H(+). It carries out the reaction D-glyceraldehyde 3-phosphate + phosphate + NAD(+) = (2R)-3-phospho-glyceroyl phosphate + NADH + H(+). It participates in carbohydrate degradation; glycolysis; pyruvate from D-glyceraldehyde 3-phosphate: step 1/5. The protein is Glyceraldehyde-3-phosphate dehydrogenase of Methanoregula boonei (strain DSM 21154 / JCM 14090 / 6A8).